Consider the following 306-residue polypeptide: Pantothenate kinase (306 aa).

ATP is bound at residue Gly-91–Ser-98.

It belongs to the prokaryotic pantothenate kinase family.

Its subcellular location is the cytoplasm. It carries out the reaction (R)-pantothenate + ATP = (R)-4'-phosphopantothenate + ADP + H(+). It functions in the pathway cofactor biosynthesis; coenzyme A biosynthesis; CoA from (R)-pantothenate: step 1/5. In Streptococcus thermophilus (strain ATCC BAA-491 / LMD-9), this protein is Pantothenate kinase.